We begin with the raw amino-acid sequence, 244 residues long: tRNA1(Val) (adenine(37)-N6)-methyltransferase (244 aa).

It belongs to the methyltransferase superfamily. tRNA (adenine-N(6)-)-methyltransferase family.

Its subcellular location is the cytoplasm. It carries out the reaction adenosine(37) in tRNA1(Val) + S-adenosyl-L-methionine = N(6)-methyladenosine(37) in tRNA1(Val) + S-adenosyl-L-homocysteine + H(+). Functionally, specifically methylates the adenine in position 37 of tRNA(1)(Val) (anticodon cmo5UAC). The sequence is that of tRNA1(Val) (adenine(37)-N6)-methyltransferase from Photorhabdus laumondii subsp. laumondii (strain DSM 15139 / CIP 105565 / TT01) (Photorhabdus luminescens subsp. laumondii).